The following is a 458-amino-acid chain: Elongation factor 1-alpha (458 aa).

Gly-2 is subject to N,N,N-trimethylglycine. Lys-3 carries the post-translational modification N6,N6-dimethyllysine; alternate. N6-methyllysine; alternate is present on Lys-3. Residues Lys-5 to Ser-240 enclose the tr-type G domain. The segment at Gly-14 to Ser-21 is G1. A GTP-binding site is contributed by Gly-14–Ser-21. Lys-30 is subject to N6-methyllysine. Residues Gly-70–Asp-74 form a G2 region. At Lys-79 the chain carries N6,N6,N6-trimethyllysine. The segment at Asp-91–Gly-94 is G3. Residues Asp-91–His-95 and Asn-153–Asp-156 each bind GTP. The tract at residues Asn-153–Asp-156 is G4. The interval Ser-192–Trp-194 is G5. Position 316 is an N6,N6-dimethyllysine; alternate (Lys-316). Lys-316 carries the N6-methyllysine; alternate modification. N6-methyllysine is present on Lys-390.

It belongs to the TRAFAC class translation factor GTPase superfamily. Classic translation factor GTPase family. EF-Tu/EF-1A subfamily.

It localises to the cytoplasm. Functionally, this protein promotes the GTP-dependent binding of aminoacyl-tRNA to the A-site of ribosomes during protein biosynthesis. This Absidia glauca (Pin mould) protein is Elongation factor 1-alpha (TEF-1).